Reading from the N-terminus, the 255-residue chain is MTMTTMPESLNSPVSGKAVFMEFGPPNQQMSPSPMSHGHYSMHCLHSAGHSQPDGAYSSASSFSRPLGYPYVNSVSSHASSPYISSVQSYPGSASLAQSRLEDPGADSEKSTVVEGGEVRFNGKGKKIRKPRTIYSSLQLQALNRRFQQTQYLALPERAELAASLGLTQTQVKIWFQNKRSKFKKLMKQGGAALEGSALANGRALSAGSPPVPPGWNPNSSSGKGSGGNAGSYIPSYTSWYPSAHQEAMQQPQLM.

The span at 1–14 shows a compositional bias: polar residues; that stretch reads MTMTTMPESLNSPV. 2 disordered regions span residues 1 to 38 and 95 to 118; these read MTMTTMPESLNSPVSGKAVFMEFGPPNQQMSPSPMSHG and SLAQSRLEDPGADSEKSTVVEGGE. A compositionally biased stretch (low complexity) spans 25-36; that stretch reads PPNQQMSPSPMS. The segment covering 100 to 112 has biased composition (basic and acidic residues); the sequence is RLEDPGADSEKST. The homeobox DNA-binding region spans 128 to 187; sequence IRKPRTIYSSLQLQALNRRFQQTQYLALPERAELAASLGLTQTQVKIWFQNKRSKFKKLM. A disordered region spans residues 204–230; it reads ALSAGSPPVPPGWNPNSSSGKGSGGNA.

The protein belongs to the distal-less homeobox family. Interacts with SMAD4 (via homeobox DNA-binding domain). Interacts (via homeobox DNA-binding domain) with POU4F2; this interaction suppresses DLX1-mediated transcriptional activity in postnatal retina and enhances retinal ganglion cell (RGC) differentiation. In terms of tissue distribution, expressed in hematopoietic cell lines.

The protein resides in the nucleus. In terms of biological role, plays a role as a transcriptional activator or repressor. Inhibits several cytokine signaling pathways, such as TGFB1, activin-A/INHBA and BMP4 by interfering with the transcriptional stimulatory activity of transcription factors, such as MSX2, FAST2, SMAD2 and SMAD3 during hematopoietic cell differentiation. Plays a role in terminal differentiation of interneurons, such as amacrine and bipolar cells in the developing retina. Likely to play a regulatory role in the development of the ventral forebrain. May play a role in craniofacial patterning and morphogenesis and may be involved in the early development of diencephalic subdivisions. This is Homeobox protein DLX-1 (DLX1) from Homo sapiens (Human).